A 216-amino-acid chain; its full sequence is Adenylate kinase (216 aa).

ATP is bound at residue 10–15 (GAGKGT). The NMP stretch occupies residues 30–59 (STGDIFRAHMSQGTPLGKLAKEYVDAGKYV). Residues threonine 31, arginine 36, 57–59 (KYV), 85–88 (GYPR), and glutamine 92 each bind AMP. The interval 126-163 (GRRVCRSCGATYHVRFNPPREAGRCDRCGGELYQRSDD) is LID. Arginine 127 serves as a coordination point for ATP. The Zn(2+) site is built by cysteine 130 and cysteine 133. 136–137 (TY) serves as a coordination point for ATP. Residues cysteine 150 and cysteine 153 each contribute to the Zn(2+) site. Arginine 160 and arginine 171 together coordinate AMP. Glutamine 199 contacts ATP.

The protein belongs to the adenylate kinase family. Monomer.

It localises to the cytoplasm. It carries out the reaction AMP + ATP = 2 ADP. The protein operates within purine metabolism; AMP biosynthesis via salvage pathway; AMP from ADP: step 1/1. Functionally, catalyzes the reversible transfer of the terminal phosphate group between ATP and AMP. Plays an important role in cellular energy homeostasis and in adenine nucleotide metabolism. This is Adenylate kinase from Symbiobacterium thermophilum (strain DSM 24528 / JCM 14929 / IAM 14863 / T).